We begin with the raw amino-acid sequence, 693 residues long: Polyribonucleotide nucleotidyltransferase (693 aa).

Mg(2+) contacts are provided by D485 and D491. The region spanning 552-611 is the KH domain; it reads PRIETMQINTSKIATVIGPGGKQIRQIIERSGAQVDINDNGLINISANTQESIDKAKELI. Residues 621–689 enclose the S1 motif domain; the sequence is GKIYNGRVTS…EKGQLKLSHK (69 aa).

Belongs to the polyribonucleotide nucleotidyltransferase family. Mg(2+) serves as cofactor.

The protein resides in the cytoplasm. The enzyme catalyses RNA(n+1) + phosphate = RNA(n) + a ribonucleoside 5'-diphosphate. In terms of biological role, involved in mRNA degradation. Catalyzes the phosphorolysis of single-stranded polyribonucleotides processively in the 3'- to 5'-direction. The polypeptide is Polyribonucleotide nucleotidyltransferase (Chlamydia muridarum (strain MoPn / Nigg)).